The primary structure comprises 50 residues: Cytochrome c oxidase subunit 4 (50 aa).

Residues 2–17 (ASHHEITDHKHGEMDI) lie on the Cytoplasmic side of the membrane. A helical transmembrane segment spans residues 18–49 (RHQQATFAGFIKGATWVSILSIAVLVFLALAN). A topological domain (periplasmic) is located at residue serine 50.

Its subcellular location is the cell inner membrane. The enzyme catalyses 4 Fe(II)-[cytochrome c] + O2 + 8 H(+)(in) = 4 Fe(III)-[cytochrome c] + 2 H2O + 4 H(+)(out). Its function is as follows. Not required for enzymatic activity or proton pumping of the cytochrome c oxidase complex. The sequence is that of Cytochrome c oxidase subunit 4 (ctaH) from Paracoccus denitrificans.